Here is a 359-residue protein sequence, read N- to C-terminus: Agropine synthesis conjugase (359 aa).

The SIS domain maps to 28-171 (TVAKFGRATA…IGGILNEREN (144 aa)).

This Rhizobium rhizogenes (Agrobacterium rhizogenes) protein is Agropine synthesis conjugase (mas2).